The sequence spans 122 residues: Sarcocystatin-A (122 aa).

An N-terminal signal peptide occupies residues methionine 1–proline 20. Glutamine 21 carries the pyrrolidone carboxylic acid modification. A Secondary area of contact motif is present at residues glutamine 67–glycine 71.

This sequence belongs to the cystatin family.

Functionally, selectively inhibits the activity of cysteine proteinase of hemocytes, protecting developing adult tissue in pupae from attack by the proteinase. This Sarcophaga peregrina (Flesh fly) protein is Sarcocystatin-A.